A 194-amino-acid chain; its full sequence is Putative 3-methyladenine DNA glycosylase (194 aa).

It belongs to the DNA glycosylase MPG family.

The polypeptide is Putative 3-methyladenine DNA glycosylase (Aeropyrum pernix (strain ATCC 700893 / DSM 11879 / JCM 9820 / NBRC 100138 / K1)).